Reading from the N-terminus, the 83-residue chain is Mu-theraphotoxin-Hhn2j 2 (83 aa).

The signal sequence occupies residues 1 to 21 (MKASMFLALAGLVLLFVVGYA). The propeptide occupies 22–48 (SESEEKEFPIELLSKIFAVDVFKGEDR). Cystine bridges form between Cys50–Cys65, Cys57–Cys70, and Cys64–Cys77. Leu81 carries the leucine amide modification.

This sequence belongs to the neurotoxin 10 (Hwtx-1) family. 15 (Hntx-3) subfamily. As to quaternary structure, monomer. As to expression, expressed by the venom gland.

The protein localises to the secreted. Lethal neurotoxin. Selectively blocks tetrodotoxin-sensitive voltage-gated sodium channels (Nav). Does not affect tetrodotoxin-resistant voltage-gated sodium channels or calcium channels. This chain is Mu-theraphotoxin-Hhn2j 2, found in Cyriopagopus hainanus (Chinese bird spider).